The chain runs to 881 residues: Serine/threonine-protein phosphatase BSL1 (881 aa).

3 Kelch repeats span residues 60–109, 269–320, and 338–385; these read GSSS…AVGT, RLHV…DQDP, and RIYV…PRFS. Disordered stretches follow at residues 368-407 and 436-464; these read SPLLASDRTQQSSTPRFSYAARPPSGSEPSFSMSEGLSLD and AGTLDEEPSTSDASSPIVESTTDGTANEG. Composition is skewed to polar residues over residues 374-383 and 445-460; these read DRTQQSSTPR and TSDASSPIVESTTDGT. Ser491 is modified (phosphoserine). The segment at 503 to 522 is disordered; that stretch reads VPMNNSDVPQPTKKFTRQKS. Positions 584, 586, 618, and 650 each coordinate Mn(2+). His651 acts as the Proton donor in catalysis. The Mn(2+) site is built by His703 and His782. Residues 837–881 are disordered; that stretch reads ILSPENSPEHSGDDAWMQELNIQRPPTPTRGRPQPDFDRSSLAYI. Ser839 is modified (phosphoserine).

This sequence belongs to the PPP phosphatase family. BSU subfamily. As to quaternary structure, interacts with CDG1 and CDL1. It depends on Mn(2+) as a cofactor. As to expression, expressed in mature cauline leaves and at the tip of influorescence, including flowers. Expressed at lower level in young tissues relative to older ones.

It is found in the nucleus. It catalyses the reaction O-phospho-L-seryl-[protein] + H2O = L-seryl-[protein] + phosphate. The enzyme catalyses O-phospho-L-threonyl-[protein] + H2O = L-threonyl-[protein] + phosphate. In terms of biological role, phosphatase involved in elongation process, probably by acting as a regulator of brassinolide signaling. In Arabidopsis thaliana (Mouse-ear cress), this protein is Serine/threonine-protein phosphatase BSL1 (BSL1).